The sequence spans 91 residues: Translation initiation factor IF-1 (91 aa).

Residues 1–72 form the S1-like domain; that stretch reads MAKEELLEFE…DRGRINFRHK (72 aa). Residues 70–91 form a disordered region; that stretch reads RHKAEGNAPPPGARRQQNFRRR.

Belongs to the IF-1 family. In terms of assembly, component of the 30S ribosomal translation pre-initiation complex which assembles on the 30S ribosome in the order IF-2 and IF-3, IF-1 and N-formylmethionyl-tRNA(fMet); mRNA recruitment can occur at any time during PIC assembly.

It localises to the cytoplasm. In terms of biological role, one of the essential components for the initiation of protein synthesis. Stabilizes the binding of IF-2 and IF-3 on the 30S subunit to which N-formylmethionyl-tRNA(fMet) subsequently binds. Helps modulate mRNA selection, yielding the 30S pre-initiation complex (PIC). Upon addition of the 50S ribosomal subunit IF-1, IF-2 and IF-3 are released leaving the mature 70S translation initiation complex. The chain is Translation initiation factor IF-1 from Azorhizobium caulinodans (strain ATCC 43989 / DSM 5975 / JCM 20966 / LMG 6465 / NBRC 14845 / NCIMB 13405 / ORS 571).